The sequence spans 153 residues: Large ribosomal subunit protein uL13 (153 aa).

It belongs to the universal ribosomal protein uL13 family. As to quaternary structure, part of the 50S ribosomal subunit.

This protein is one of the early assembly proteins of the 50S ribosomal subunit, although it is not seen to bind rRNA by itself. It is important during the early stages of 50S assembly. This chain is Large ribosomal subunit protein uL13, found in Azorhizobium caulinodans (strain ATCC 43989 / DSM 5975 / JCM 20966 / LMG 6465 / NBRC 14845 / NCIMB 13405 / ORS 571).